A 57-amino-acid chain; its full sequence is UPF0391 membrane protein RPB_2024 (57 aa).

The next 2 membrane-spanning stretches (helical) occupy residues 4–24 (WVVTFLVVALIAGLLGFGGIA) and 30–50 (IAKVIFFIAIVLFLVSAVVGL).

It belongs to the UPF0391 family.

The protein localises to the cell membrane. In Rhodopseudomonas palustris (strain HaA2), this protein is UPF0391 membrane protein RPB_2024.